Here is a 566-residue protein sequence, read N- to C-terminus: Alpha-amylase (566 aa).

The N-terminal stretch at 1 to 28 (MARRLATASLAVLAAAATALTAPTPAAA) is a signal peptide. Ca(2+)-binding residues include Asn-120, Gln-166, and Asp-175. The active-site Nucleophile is the Asp-205. His-209 is a binding site for Ca(2+). Glu-232 acts as the Proton donor in catalysis. One can recognise a CBM20 domain in the interval 465–566 (GPGTGQTSAS…ALTLNDTWRG (102 aa)).

Belongs to the glycosyl hydrolase 13 family. In terms of assembly, monomer. Ca(2+) is required as a cofactor.

It carries out the reaction Endohydrolysis of (1-&gt;4)-alpha-D-glucosidic linkages in polysaccharides containing three or more (1-&gt;4)-alpha-linked D-glucose units.. The sequence is that of Alpha-amylase (amy) from Streptomyces griseus.